The primary structure comprises 196 residues: Ribosomal RNA small subunit methyltransferase G (196 aa).

S-adenosyl-L-methionine-binding positions include G77, F82, 127–128 (AE), and R140.

The protein belongs to the methyltransferase superfamily. RNA methyltransferase RsmG family.

The protein resides in the cytoplasm. Its function is as follows. Specifically methylates the N7 position of a guanine in 16S rRNA. This chain is Ribosomal RNA small subunit methyltransferase G, found in Aquifex aeolicus (strain VF5).